The following is a 209-amino-acid chain: Protein GrpE (209 aa).

A compositionally biased stretch (polar residues) spans 1 to 13; it reads MSNDSSKAKQNQV. Residues 1–33 form a disordered region; sequence MSNDSSKAKQNQVDEAVEGEILTESEVETGNDE. Acidic residues predominate over residues 15-31; it reads EAVEGEILTESEVETGN.

Belongs to the GrpE family. As to quaternary structure, homodimer.

The protein resides in the cytoplasm. Its function is as follows. Participates actively in the response to hyperosmotic and heat shock by preventing the aggregation of stress-denatured proteins, in association with DnaK and GrpE. It is the nucleotide exchange factor for DnaK and may function as a thermosensor. Unfolded proteins bind initially to DnaJ; upon interaction with the DnaJ-bound protein, DnaK hydrolyzes its bound ATP, resulting in the formation of a stable complex. GrpE releases ADP from DnaK; ATP binding to DnaK triggers the release of the substrate protein, thus completing the reaction cycle. Several rounds of ATP-dependent interactions between DnaJ, DnaK and GrpE are required for fully efficient folding. This is Protein GrpE from Shewanella woodyi (strain ATCC 51908 / MS32).